The following is a 197-amino-acid chain: Phosphoheptose isomerase (197 aa).

Positions 34 to 192 constitute an SIS domain; the sequence is MVNALINGNK…CEGVDDCLFP (159 aa). Substrate contacts are provided by residues 49–51, Q62, 91–92, S122, and H172; these read NGG and ND. Q62 provides a ligand contact to Zn(2+). Residues H172 and H180 each coordinate Zn(2+).

This sequence belongs to the SIS family. GmhA subfamily. In terms of assembly, homotetramer. Requires Zn(2+) as cofactor.

It localises to the cytoplasm. The catalysed reaction is 2 D-sedoheptulose 7-phosphate = D-glycero-alpha-D-manno-heptose 7-phosphate + D-glycero-beta-D-manno-heptose 7-phosphate. Its pathway is carbohydrate biosynthesis; D-glycero-D-manno-heptose 7-phosphate biosynthesis; D-glycero-alpha-D-manno-heptose 7-phosphate and D-glycero-beta-D-manno-heptose 7-phosphate from sedoheptulose 7-phosphate: step 1/1. Catalyzes the isomerization of sedoheptulose 7-phosphate in D-glycero-D-manno-heptose 7-phosphate. In Pseudoalteromonas atlantica (strain T6c / ATCC BAA-1087), this protein is Phosphoheptose isomerase.